The primary structure comprises 451 residues: Endosomal transmembrane epsin interactor 1 (451 aa).

The N-terminal stretch at 1-29 (MILLVNLFVLLSVVCILLNLAGFILGCQG) is a signal peptide. Residues 30-85 (AQFVSSVPRCDLVDLGEGKICFCCEEFQPAKCTDKENALKLFPVQPCSAVHLLLKK) lie on the Lumenal side of the membrane. Residues 86–106 (VLFALCALNALTTTVCLVAAA) form a helical membrane-spanning segment. Residues 107-451 (LRYLQIFASR…LIGVIRETVL (345 aa)) lie on the Cytoplasmic side of the membrane. The segment at 107–451 (LRYLQIFASR…LIGVIRETVL (345 aa)) is mediates interaction with EPN1. 2 short sequence motifs (PPxY; mediates interaction with ITCH) span residues 148-151 (PPSY) and 194-197 (PPPY). Polar residues predominate over residues 204-213 (TDQEQESSFQ). Residues 204-224 (TDQEQESSFQMPEGPETAASP) are disordered. A Glycyl lysine isopeptide (Lys-Gly) (interchain with G-Cter in ubiquitin) cross-link involves residue Lys-274. Residue Ser-275 is modified to Phosphoserine. Residue Lys-365 forms a Glycyl lysine isopeptide (Lys-Gly) (interchain with G-Cter in ubiquitin) linkage.

This sequence belongs to the ENTREP family. As to quaternary structure, interacts with ITCH; enhances the ubiquitination of CXCR4 by ITCH and the subsequent endocytosis and desensitization of the receptor. Interacts with EPN1.

Its subcellular location is the early endosome membrane. It is found in the late endosome membrane. The protein localises to the recycling endosome membrane. The protein resides in the cell membrane. Functionally, functions as an activator of the E3 ubiquitin protein ligase ITCH in the ubiquitination of the CXCL12-activated CXCR4 receptor. Thereby, triggers CXCR4 endocytosis and desensitization, negatively regulating the CXCL12/CXCR4 signaling pathway. The polypeptide is Endosomal transmembrane epsin interactor 1 (Mus musculus (Mouse)).